Here is a 148-residue protein sequence, read N- to C-terminus: Large ribosomal subunit protein uL15 (148 aa).

Residues 1-30 (MPSRLRKTRKLRGHVSHGHGRIGKHRKHPG) show a composition bias toward basic residues. The interval 1 to 37 (MPSRLRKTRKLRGHVSHGHGRIGKHRKHPGGRGNAGG) is disordered. H39 carries the (3S)-3-hydroxyhistidine modification. N6-acetyllysine occurs at positions 47 and 55. The residue at position 68 (S68) is a Phosphoserine. N6-acetyllysine is present on K110.

This sequence belongs to the universal ribosomal protein uL15 family. Component of the large ribosomal subunit. Post-translationally, hydroxylated on His-39 by MINA.

The protein resides in the cytoplasm. Functionally, component of the large ribosomal subunit. The ribosome is a large ribonucleoprotein complex responsible for the synthesis of proteins in the cell. The protein is Large ribosomal subunit protein uL15 (RPL27A) of Bos taurus (Bovine).